The primary structure comprises 146 residues: uncharacterized protein (146 aa).

Residues 67 to 93 (DDNGMESGFCSGATSTGQSASTSPAPV) are disordered. The segment covering 77 to 92 (SGATSTGQSASTSPAP) has biased composition (low complexity).

This is an uncharacterized protein from Caenorhabditis elegans.